The chain runs to 1335 residues: Restriction of telomere capping protein 1 (1335 aa).

The disordered stretch occupies residues 1–39 (MSLSPHVENASIPKGSTPIPKNRNVSSIGKGEFLGSSSS). WD repeat units follow at residues 207–248 (NKFS…SIDN), 256–296 (EHTR…SKSS), 305–342 (TASD…YKFA), 367–406 (AHTG…NAAE), 439–486 (NTGY…IPKH), and 489–527 (LSET…TVLE). Disordered regions lie at residues 559–593 (PELQ…IGGI), 600–619 (TGLT…GPTF), 630–651 (ASSF…ENRE), 736–758 (KNAT…DDDD), and 783–824 (NEKV…DRSR). Over residues 630-644 (ASSFNSSSASLTSLT) the composition is skewed to low complexity. Residues 808 to 817 (SSISSISASR) are compositionally biased toward low complexity. One copy of the WD 7 repeat lies at 844–884 (LISIATHNASVYLSIDDLTNFKIWILIRDSLLWDLKWMTSS). Disordered stretches follow at residues 935–956 (AFRA…KLKE) and 1007–1037 (DEHE…KSIP). Composition is skewed to basic and acidic residues over residues 945-956 (DAEKKPVSKLKE) and 1009-1021 (HEHQ…HDSP). Phosphoserine is present on residues Ser-1030, Ser-1074, Ser-1081, Ser-1083, Ser-1117, and Ser-1127. 2 WD repeats span residues 1130 to 1170 (REQL…TETG) and 1217 to 1256 (VLKY…KEKL). The segment at 1294-1335 (LKKLTMVILPCGHEGHFQCIQEWFLDENEQECPGGCPGVAFI) adopts an RING-type; degenerate zinc-finger fold.

This sequence belongs to the WD repeat RTC1 family.

Its subcellular location is the vacuole. May be involved in a process influencing telomere capping. This Saccharomyces cerevisiae (strain YJM789) (Baker's yeast) protein is Restriction of telomere capping protein 1 (RTC1).